The chain runs to 435 residues: Membrane-bound ghrelin O-acyltransferase MBOAT4 (435 aa).

The Lumenal portion of the chain corresponds to 1 to 5; the sequence is MDWLQ. A helical transmembrane segment spans residues 6–26; it reads LFFLHPLSFYQGAAFPFALLF. Over 27 to 40 the chain is Cytoplasmic; sequence NYLCILDTFSTRAR. Residues 41–56 form a helical membrane-spanning segment; sequence YLFLLAGGGVLAFAAM. The Lumenal segment spans residues 57–59; it reads GPY. A helical transmembrane segment spans residues 60-76; that stretch reads SLLIFIPALCAVALVSF. Residues 77–82 are Cytoplasmic-facing; that stretch reads LSPQEV. The chain crosses the membrane as a helical span at residues 83-101; it reads HRLTFFFQMGWQTLCHLGL. The Lumenal segment spans residues 102–120; the sequence is HYTEYYLGEPPPVRFYITL. Residues 121–136 form a helical membrane-spanning segment; the sequence is SSLMLLTQRVTSLSLD. The Cytoplasmic segment spans residues 137 to 206; that stretch reads ICEGKVEAPR…YPSISFRALT (70 aa). The chain crosses the membrane as a helical span at residues 207 to 227; the sequence is WRGLQILGLECLKVALRSAVS. Over 228-240 the chain is Lumenal; it reads AGAGLDDCQRLEC. The helical transmembrane segment at 241–261 threads the bilayer; the sequence is IYLMWSTAWLFKLTYYSHWIL. The Cytoplasmic portion of the chain corresponds to 262–324; sequence DDSLLHAAGF…RRLVFRKSRR (63 aa). Active-site residues include Asn-307 and His-338. Residues 325–338 traverse the membrane as a helical segment; it reads WPLLQTFAFSAWWH. Residues 339 to 340 lie on the Lumenal side of the membrane; it reads GL. A helical transmembrane segment spans residues 341–357; it reads HPGQVFGFLCWSVMVKA. The Cytoplasmic portion of the chain corresponds to 358-376; it reads DYLIHTFANVCIRSWPLRL. The chain crosses the membrane as a helical span at residues 377–397; it reads LYRALTWAHTQLIIAYIMLAV. The Lumenal portion of the chain corresponds to 398–407; the sequence is EGRSLSSLCQ. The chain crosses the membrane as a helical span at residues 408–428; the sequence is LCCSYNSLFPVMYGLLLFLLA. Over 429–435 the chain is Cytoplasmic; sequence ERKDKRN.

The protein belongs to the membrane-bound acyltransferase family. Monomer. Post-translationally, not glycosylated. In terms of tissue distribution, highly expressed in stomach and pancreas. Lower expression in small intestine and colon. Very low expression in testis.

Its subcellular location is the endoplasmic reticulum membrane. It catalyses the reaction octanoyl-CoA + L-seryl-[protein] = O-octanoyl-L-seryl-[protein] + CoA. The enzyme catalyses hexanoyl-CoA + L-seryl-[protein] = O-hexanoyl-L-seryl-[protein] + CoA. The catalysed reaction is decanoyl-CoA + L-seryl-[protein] = O-decanoyl-L-seryl-[protein] + CoA. It carries out the reaction L-seryl-[protein] + acetyl-CoA = O-acetyl-L-seryl-[protein] + CoA. It catalyses the reaction L-seryl-[protein] + butanoyl-CoA = O-butanoyl-L-seryl-[protein] + CoA. The enzyme catalyses pentanoyl-CoA + L-seryl-[protein] = O-pentanoyl-L-seryl-[protein] + CoA. The catalysed reaction is heptanoyl-CoA + L-seryl-[protein] = O-heptanoyl-L-seryl-[protein] + CoA. It carries out the reaction nonanoyl-CoA + L-seryl-[protein] = O-nonanoyl-L-seryl-[protein] + CoA. It catalyses the reaction L-seryl-[protein] + dodecanoyl-CoA = O-dodecanoyl-L-seryl-[protein] + CoA. The enzyme catalyses L-seryl-[protein] + tetradecanoyl-CoA = O-tetradecanoyl-L-seryl-[protein] + CoA. The catalysed reaction is a fatty acyl-CoA + L-seryl-[protein] = O-fatty acyl-L-seryl-[protein] + CoA. With respect to regulation, inhibited by 1-[2-cyano-3,12-dioxooleana-1,9(11)- dien-28-oyl]ethylamide (CDDO-EA) with an IC(50) of 60 uM. Inhibited by Fe3+ and Cu2+ and the O-acyltransferase activity is completely blocked over 5 mM Fe3+ and 0.5 mM Cu2+. In terms of biological role, catalyzes ghrelin acylation at 'Ser-3' using preferentially octanoyl-CoA, hexanoyl-CoA and decanoyl-CoA as acyl-CoA donors leading to ghrelin activity. In vitro also uses acyl-CoA donors of different lengths from short-chain (C2) to long-chain fatty acids (C16) knowing that acyl-CoA donors from butanoyl-CoA (C4) to dodecanoyl-CoA (C12) are more efficient compared to longer acyl-CoA donors, such as myristoyl-CoA (C14) and palmitoyl-CoA (C16) that are not efficient. Inactive octanoyltransferase activity. This Mus musculus (Mouse) protein is Membrane-bound ghrelin O-acyltransferase MBOAT4.